A 236-amino-acid polypeptide reads, in one-letter code: uncharacterized protein (236 aa).

Disordered stretches follow at residues 1–48, 67–122, and 134–192; these read MHLR…RTFS, VHTP…HSPR, and KLHP…PNNT. The segment covering 85-99 has biased composition (basic residues); it reads RAHRTAKHPARRQSC. Residues 180–189 are compositionally biased toward pro residues; it reads PSPAIKPSPP.

This is an uncharacterized protein from Encephalitozoon cuniculi (strain GB-M1) (Microsporidian parasite).